The following is a 382-amino-acid chain: 8-amino-7-oxononanoate synthase (382 aa).

2 residues coordinate substrate: Arg-22 and Arg-29. 109–110 (GF) contacts pyridoxal 5'-phosphate. His-134 contributes to the substrate binding site. Residues Ser-182, 207 to 210 (DDAH), and 233 to 236 (TLSK) each bind pyridoxal 5'-phosphate. An N6-(pyridoxal phosphate)lysine modification is found at Lys-236. Thr-345 serves as a coordination point for substrate.

The protein belongs to the class-II pyridoxal-phosphate-dependent aminotransferase family. BioF subfamily. As to quaternary structure, homodimer. Pyridoxal 5'-phosphate serves as cofactor.

The enzyme catalyses 6-carboxyhexanoyl-[ACP] + L-alanine + H(+) = (8S)-8-amino-7-oxononanoate + holo-[ACP] + CO2. The protein operates within cofactor biosynthesis; biotin biosynthesis. In terms of biological role, catalyzes the decarboxylative condensation of pimeloyl-[acyl-carrier protein] and L-alanine to produce 8-amino-7-oxononanoate (AON), [acyl-carrier protein], and carbon dioxide. This is 8-amino-7-oxononanoate synthase from Granulibacter bethesdensis (strain ATCC BAA-1260 / CGDNIH1).